The sequence spans 1357 residues: DNA-directed RNA polymerase subunit beta (1357 aa).

It belongs to the RNA polymerase beta chain family. The RNAP catalytic core consists of 2 alpha, 1 beta, 1 beta' and 1 omega subunit. When a sigma factor is associated with the core the holoenzyme is formed, which can initiate transcription.

The enzyme catalyses RNA(n) + a ribonucleoside 5'-triphosphate = RNA(n+1) + diphosphate. DNA-dependent RNA polymerase catalyzes the transcription of DNA into RNA using the four ribonucleoside triphosphates as substrates. The sequence is that of DNA-directed RNA polymerase subunit beta from Pseudomonas aeruginosa (strain LESB58).